Reading from the N-terminus, the 496-residue chain is Transmembrane protein 104 (496 aa).

At Met-1–Glu-10 the chain is on the cytoplasmic side. The chain crosses the membrane as a helical span at residues Leu-11–Leu-31. Residues Thr-32–Ala-36 are Extracellular-facing. The helical transmembrane segment at Phe-37–Phe-57 threads the bilayer. Residues Val-58 to Asn-146 lie on the Cytoplasmic side of the membrane. The helical transmembrane segment at Leu-147–Val-167 threads the bilayer. Topologically, residues Pro-168 to Arg-204 are extracellular. Asn-193 carries N-linked (GlcNAc...) asparagine glycosylation. A helical membrane pass occupies residues Val-205–Phe-225. Over Asp-226 to Leu-233 the chain is Cytoplasmic. The helical transmembrane segment at Gln-234–Ile-254 threads the bilayer. At Arg-255–Leu-276 the chain is on the extracellular side. The chain crosses the membrane as a helical span at residues Phe-277–Val-297. At Ser-298–Leu-306 the chain is on the cytoplasmic side. Residues Val-307–Phe-327 traverse the membrane as a helical segment. Over Cys-328–Arg-354 the chain is Extracellular. The helical transmembrane segment at Phe-355–Thr-375 threads the bilayer. Over Leu-376–Arg-397 the chain is Cytoplasmic. The helical transmembrane segment at Val-398 to Leu-418 threads the bilayer. The Extracellular segment spans residues Glu-419–Leu-421. Residues Val-422–Val-442 traverse the membrane as a helical segment. Topologically, residues Tyr-443–Trp-470 are cytoplasmic. Residues Val-471–Leu-491 form a helical membrane-spanning segment. Over Ser-492 to Leu-496 the chain is Extracellular.

The protein belongs to the TMEM104 family.

The protein resides in the membrane. In Homo sapiens (Human), this protein is Transmembrane protein 104 (TMEM104).